Reading from the N-terminus, the 336-residue chain is Anthranilate phosphoribosyltransferase (336 aa).

5-phospho-alpha-D-ribose 1-diphosphate is bound by residues Gly79, 82–83, Thr87, 89–92, 107–115, and Ser119; these read GD, NISS, and KHGNRSVSS. Gly79 lines the anthranilate pocket. Position 91 (Ser91) interacts with Mg(2+). Asn110 provides a ligand contact to anthranilate. Residue Arg165 coordinates anthranilate. Mg(2+)-binding residues include Asp223 and Glu224.

This sequence belongs to the anthranilate phosphoribosyltransferase family. In terms of assembly, homodimer. Mg(2+) serves as cofactor.

It carries out the reaction N-(5-phospho-beta-D-ribosyl)anthranilate + diphosphate = 5-phospho-alpha-D-ribose 1-diphosphate + anthranilate. It participates in amino-acid biosynthesis; L-tryptophan biosynthesis; L-tryptophan from chorismate: step 2/5. In terms of biological role, catalyzes the transfer of the phosphoribosyl group of 5-phosphorylribose-1-pyrophosphate (PRPP) to anthranilate to yield N-(5'-phosphoribosyl)-anthranilate (PRA). The polypeptide is Anthranilate phosphoribosyltransferase (Tolumonas auensis (strain DSM 9187 / NBRC 110442 / TA 4)).